We begin with the raw amino-acid sequence, 513 residues long: Na(+)/H(+) antiporter NhaB (513 aa).

Helical transmembrane passes span 23 to 43 (LALIIFLIVNPLIFLISPFVA), 52 to 72 (IFTLAMALKCYPLLPGGLLAI), 97 to 117 (LLLMFMVAGIYFMKQLLLFIF), 120 to 140 (LLLSIRSKMLLSLSFCVAAAF), 144 to 164 (FLDALTVVAVVISVAVGFYGI), 202 to 222 (LMMHAGVGTALGGVMTMVGEP), 238 to 258 (FFLRMSPVTVPVLICGLLTCL), 303 to 323 (AIIGVWLVTALALHLAEVGLI), 348 to 368 (TESLPFTALLTVFFSVVAVII), 391 to 411 (LFYIFNGLLSSISDNVFVGTI), 447 to 467 (ATPNGQAAFLFLLTSALAPLI), and 475 to 495 (VWMALPYTLVLTLVGLLCVEF).

This sequence belongs to the NhaB Na(+)/H(+) (TC 2.A.34) antiporter family.

The protein localises to the cell inner membrane. It carries out the reaction 2 Na(+)(in) + 3 H(+)(out) = 2 Na(+)(out) + 3 H(+)(in). Its function is as follows. Na(+)/H(+) antiporter that extrudes sodium in exchange for external protons. The chain is Na(+)/H(+) antiporter NhaB from Shigella flexneri serotype 5b (strain 8401).